A 24-amino-acid chain; its full sequence is Homotarsinin (24 aa).

R24 is subject to Arginine amide.

As to quaternary structure, homodimer; disulfide-linked. In terms of tissue distribution, expressed by the skin glands.

The protein resides in the secreted. Its function is as follows. Antimicrobial peptide. Active against Gram-negative bacteria E.coli ATCC 25922 (MIC=1.5 uM) and P.aeruginosa ATTC 27853 (MIC=23.2 uM) and against Gram-positive bacterium S.aureus ATCC 29313 (MIC=11.6 uM). Has no hemolytic activity. Associates with and disrupts membranes in vitro. The protein is Homotarsinin of Phyllomedusa tarsius (Brownbelly leaf frog).